The following is a 339-amino-acid chain: Methionine import ATP-binding protein MetN 2 (339 aa).

Residues 2–241 form the ABC transporter domain; that stretch reads ISFNNVSKVY…PKTTTTQNFV (240 aa). 38 to 45 lines the ATP pocket; the sequence is GFSGAGKS.

The protein belongs to the ABC transporter superfamily. Methionine importer (TC 3.A.1.24) family. The complex is composed of two ATP-binding proteins (MetN), two transmembrane proteins (MetI) and a solute-binding protein (MetQ).

It localises to the cell membrane. It carries out the reaction L-methionine(out) + ATP + H2O = L-methionine(in) + ADP + phosphate + H(+). The catalysed reaction is D-methionine(out) + ATP + H2O = D-methionine(in) + ADP + phosphate + H(+). Its function is as follows. Part of the ABC transporter complex MetNIQ involved in methionine import. Responsible for energy coupling to the transport system. This Bacillus anthracis protein is Methionine import ATP-binding protein MetN 2.